A 1056-amino-acid polypeptide reads, in one-letter code: Ribosomal protein S6 kinase delta-1 (1056 aa).

One can recognise a PX domain in the interval Ser8–Asp132. The disordered stretch occupies residues Val204 to Ser223. Positions Glu212–Arg222 are enriched in basic and acidic residues. Positions Val276–Ser304 constitute an MIT domain. Residues Ser281, Ser422, Ser423, Ser426, Ser446, Ser448, and Ser454 each carry the phosphoserine modification. The Protein kinase 1 domain occupies Gly343–Gln444. The disordered stretch occupies residues Ser426–Glu504. The span at Gln443–Ser454 shows a compositional bias: low complexity. A compositionally biased stretch (polar residues) spans Thr473–Asp482. Phosphoserine occurs at positions 493 and 527. A disordered region spans residues Ser529 to Lys588. Positions Gln544–Thr561 are enriched in polar residues. A compositionally biased stretch (low complexity) spans Ser576 to Ser587. Phosphoserine is present on residues Ser577, Ser599, Ser602, Ser634, Ser655, Ser658, Ser661, and Ser787. Positions Thr628–Val662 are disordered. The Protein kinase 2 domain occupies Arg789–Phe1046. Residues Leu795–Thr803 and Lys823 each bind ATP. The active-site Proton acceptor is the Asp919.

The protein belongs to the protein kinase superfamily. Ser/Thr protein kinase family. S6 kinase subfamily. In terms of assembly, interacts with SPHK1 and phosphatidylinositol 3-phosphate. Interacts (via PX domain) with PRDX3.

The protein localises to the cytoplasm. It localises to the membrane. It is found in the early endosome. The catalysed reaction is L-seryl-[protein] + ATP = O-phospho-L-seryl-[protein] + ADP + H(+). The enzyme catalyses L-threonyl-[protein] + ATP = O-phospho-L-threonyl-[protein] + ADP + H(+). In terms of biological role, may be involved in transmitting sphingosine-1 phosphate (SPP)-mediated signaling into the cell. Plays a role in the recruitment of PRDX3 to early endosomes. The sequence is that of Ribosomal protein S6 kinase delta-1 (Rps6kc1) from Mus musculus (Mouse).